Here is a 67-residue protein sequence, read N- to C-terminus: Small integral membrane protein 20 (67 aa).

Residues M1 to R6 are Mitochondrial matrix-facing. Residues T7–F27 form a helical membrane-spanning segment. Residues R28–K67 are Mitochondrial intermembrane-facing. F64 is subject to Phenylalanine amide.

As to quaternary structure, component of the MITRAC (mitochondrial translation regulation assembly intermediate of cytochrome c oxidase complex) complex, the core components of this complex being COA3/MITRAC12 and COX14. Interacts with COA3/MITRAC12 and COX4I1. Directly interacts with newly synthesized MT-CO1/COX1. In terms of tissue distribution, expressed in the ovary, specifically in granulosa cells of follicles that have passed the primary stage and in oocytes (at protein level).

The protein resides in the mitochondrion inner membrane. It is found in the secreted. In terms of biological role, component of the MITRAC (mitochondrial translation regulation assembly intermediate of cytochrome c oxidase complex) complex, that regulates cytochrome c oxidase assembly. Promotes the progression of complex assembly after the association of MT-CO1/COX1 with COX4I1 and COX6C. Chaperone-like assembly factor required to stabilize newly synthesized MT-CO1/COX1 and to prevent its premature turnover. Peptide involved in a broad spectrum of regulatory functions. Is a ligand for GPR173. As part of the reproductive cycle, it regulates gonadotropin-releasing hormone (GnRH) signaling in the hypothalamus and pituitary gland which augments the release of luteinizing hormone. Plays a protective role in memory retention through activation of GNRHR. Regulates the secretion of AVP by hypothalamic neurons. Plays a role in the transduction of the itch sensation. Induces anxiolytic effects, reducing behavior associated with anxiety. Regulates food intake as well as satiation and satiety. In the ovary, it regulates follicular growth by stimulating granulosa cell proliferation by increasing the expression of GPR173, CREB1, CYP19A1, KITLG, FSHR, and LHCGR. It also increases the production of estradiol (E2). In the heart, it regulates contractility and relaxation. It also plays a cardioprotective role during ischemia, where it activates the SAFE and RISK pathways. Stimulates the proliferation and differentiation of preadipocytes. In pancreatic islet cells, it induces proliferation of islet cells as well as the production of INS. The sequence is that of Small integral membrane protein 20 (SMIM20) from Homo sapiens (Human).